Reading from the N-terminus, the 511-residue chain is AMP phosphorylase (511 aa).

AMP contacts are provided by residues G168, 194–199 (SRAITS), and T203. The Proton donor role is filled by D256. Positions 262 and 286 each coordinate AMP.

This sequence belongs to the thymidine/pyrimidine-nucleoside phosphorylase family. Type 2 subfamily.

The catalysed reaction is AMP + phosphate = alpha-D-ribose 1,5-bisphosphate + adenine. It catalyses the reaction CMP + phosphate = cytosine + alpha-D-ribose 1,5-bisphosphate. It carries out the reaction UMP + phosphate = alpha-D-ribose 1,5-bisphosphate + uracil. Functionally, catalyzes the conversion of AMP and phosphate to adenine and ribose 1,5-bisphosphate (R15P). Exhibits phosphorylase activity toward CMP and UMP in addition to AMP. Functions in an archaeal AMP degradation pathway, together with R15P isomerase and RubisCO. The protein is AMP phosphorylase of Thermofilum pendens (strain DSM 2475 / Hrk 5).